A 158-amino-acid polypeptide reads, in one-letter code: Small ribosomal subunit protein uS9 (158 aa).

This sequence belongs to the universal ribosomal protein uS9 family.

In Rhodopseudomonas palustris (strain HaA2), this protein is Small ribosomal subunit protein uS9.